The chain runs to 145 residues: UPF0763 protein WS1752 (145 aa).

This sequence belongs to the UPF0763 family.

The protein is UPF0763 protein WS1752 of Wolinella succinogenes (strain ATCC 29543 / DSM 1740 / CCUG 13145 / JCM 31913 / LMG 7466 / NCTC 11488 / FDC 602W) (Vibrio succinogenes).